A 434-amino-acid polypeptide reads, in one-letter code: dTDP-D-glucose 4,6-dehydratase (434 aa).

Thr134 provides a ligand contact to substrate. Catalysis depends on Asp135, which acts as the Proton donor. Active-site proton acceptor residues include Glu136 and Tyr169. The segment covering 286 to 309 (NNNNNNNNNNNNNNNNNNNNNNNN) has biased composition (low complexity). The segment at 286–310 (NNNNNNNNNNNNNNNNNNNNNNNND) is disordered.

It belongs to the NAD(P)-dependent epimerase/dehydratase family. dTDP-glucose dehydratase subfamily. Requires NAD(+) as cofactor.

It carries out the reaction dTDP-alpha-D-glucose = dTDP-4-dehydro-6-deoxy-alpha-D-glucose + H2O. The chain is dTDP-D-glucose 4,6-dehydratase (tgds) from Dictyostelium discoideum (Social amoeba).